A 214-amino-acid polypeptide reads, in one-letter code: Large ribosomal subunit protein uL3 (214 aa).

A disordered region spans residues 136-156; the sequence is THGNSLSHRAPGSIGQNQTPG. Gln-153 carries the post-translational modification N5-methylglutamine.

This sequence belongs to the universal ribosomal protein uL3 family. As to quaternary structure, part of the 50S ribosomal subunit. Forms a cluster with proteins L14 and L19. Post-translationally, methylated by PrmB.

Functionally, one of the primary rRNA binding proteins, it binds directly near the 3'-end of the 23S rRNA, where it nucleates assembly of the 50S subunit. In Thioalkalivibrio sulfidiphilus (strain HL-EbGR7), this protein is Large ribosomal subunit protein uL3.